The primary structure comprises 153 residues: Transcription antitermination protein NusB (153 aa).

It belongs to the NusB family.

Its function is as follows. Involved in transcription antitermination. Required for transcription of ribosomal RNA (rRNA) genes. Binds specifically to the boxA antiterminator sequence of the ribosomal RNA (rrn) operons. The chain is Transcription antitermination protein NusB from Symbiobacterium thermophilum (strain DSM 24528 / JCM 14929 / IAM 14863 / T).